Reading from the N-terminus, the 66-residue chain is Cytoplasmic envelopment protein 3 (66 aa).

G2 is lipidated: N-myristoyl glycine; by host.

The protein belongs to the herpesviridae cytoplasmic envelopment protein 3 family. Interacts with cytoplasmic envelopment protein 2; this interaction is essential for the proper localization of each protein to the assembly complex and thus for the production of infectious virus. Post-translationally, phosphorylated. Phosphorylation does not seem to be required for recycling to the host Golgi apparatus. Packaging is selective for underphosphorylated forms.

The protein localises to the virion tegument. It localises to the virion membrane. Its subcellular location is the host cell membrane. The protein resides in the host Golgi apparatus membrane. Plays an important role in the cytoplasmic envelopment of tegument proteins and capsids during the assembly and egress processes. Also participates in viral entry at the fusion step probably by regulating the core fusion machinery. The polypeptide is Cytoplasmic envelopment protein 3 (38) (Saimiriine herpesvirus 2 (strain 11) (SaHV-2)).